Here is a 260-residue protein sequence, read N- to C-terminus: Thiazole synthase (260 aa).

The active-site Schiff-base intermediate with DXP is K101. 1-deoxy-D-xylulose 5-phosphate contacts are provided by residues G162, 188-189 (AG), and 210-211 (NT).

This sequence belongs to the ThiG family. As to quaternary structure, homotetramer. Forms heterodimers with either ThiH or ThiS.

The protein localises to the cytoplasm. It carries out the reaction [ThiS sulfur-carrier protein]-C-terminal-Gly-aminoethanethioate + 2-iminoacetate + 1-deoxy-D-xylulose 5-phosphate = [ThiS sulfur-carrier protein]-C-terminal Gly-Gly + 2-[(2R,5Z)-2-carboxy-4-methylthiazol-5(2H)-ylidene]ethyl phosphate + 2 H2O + H(+). Its pathway is cofactor biosynthesis; thiamine diphosphate biosynthesis. In terms of biological role, catalyzes the rearrangement of 1-deoxy-D-xylulose 5-phosphate (DXP) to produce the thiazole phosphate moiety of thiamine. Sulfur is provided by the thiocarboxylate moiety of the carrier protein ThiS. In vitro, sulfur can be provided by H(2)S. The protein is Thiazole synthase of Acidithiobacillus ferrooxidans (strain ATCC 23270 / DSM 14882 / CIP 104768 / NCIMB 8455) (Ferrobacillus ferrooxidans (strain ATCC 23270)).